Reading from the N-terminus, the 345-residue chain is Leucine-rich repeat and transmembrane domain-containing protein 1 (345 aa).

The first 27 residues, 1–27 (MKGELLLFSSVIVLLQVVCSCPDKCYC), serve as a signal peptide directing secretion. An LRRNT domain is found at 28–50 (QSSTNFVDCSQQGLAEIPSHLPP). Residues 28–288 (QSSTNFVDCS…PANLRHAIAT (261 aa)) lie on the Extracellular side of the membrane. LRR repeat units lie at residues 51–72 (QTRT…AFRS), 75–96 (WLMT…AFHG), 99–120 (HLQV…LFHS), 123–144 (QLRE…LGET), and 147–168 (NLTI…LLES). The N-linked (GlcNAc...) asparagine glycan is linked to Asn104. Asn147 carries an N-linked (GlcNAc...) asparagine glycan. Residues 180–234 (NLWKCNCHLLGLKLWLEKFVYKGGLTDGIICESPDTWKGKDLLRIPHELYQPCPL) enclose the LRRCT domain. Residues 289-309 (VIITGVVCGIVCLMMLAAAIY) form a helical membrane-spanning segment. Residues 310–345 (GCTYAAITAQYHGGPLAQTNDPGKVEEKERFDSSPA) lie on the Cytoplasmic side of the membrane. The segment at 326–345 (AQTNDPGKVEEKERFDSSPA) is disordered. Residues 332-345 (GKVEEKERFDSSPA) are compositionally biased toward basic and acidic residues.

The protein localises to the membrane. In Homo sapiens (Human), this protein is Leucine-rich repeat and transmembrane domain-containing protein 1 (LRTM1).